Reading from the N-terminus, the 428-residue chain is Enolase (428 aa).

Gln-162 provides a ligand contact to (2R)-2-phosphoglycerate. The active-site Proton donor is the Glu-204. Positions 241, 286, and 313 each coordinate Mg(2+). (2R)-2-phosphoglycerate contacts are provided by Lys-338, Arg-367, Ser-368, and Lys-389. Lys-338 acts as the Proton acceptor in catalysis.

It belongs to the enolase family. As to quaternary structure, component of the RNA degradosome, a multiprotein complex involved in RNA processing and mRNA degradation. Mg(2+) is required as a cofactor.

The protein localises to the cytoplasm. It is found in the secreted. Its subcellular location is the cell surface. The catalysed reaction is (2R)-2-phosphoglycerate = phosphoenolpyruvate + H2O. It participates in carbohydrate degradation; glycolysis; pyruvate from D-glyceraldehyde 3-phosphate: step 4/5. Catalyzes the reversible conversion of 2-phosphoglycerate (2-PG) into phosphoenolpyruvate (PEP). It is essential for the degradation of carbohydrates via glycolysis. The sequence is that of Enolase from Vesicomyosocius okutanii subsp. Calyptogena okutanii (strain HA).